Here is a 503-residue protein sequence, read N- to C-terminus: 4-trimethylaminobutyraldehyde dehydrogenase (503 aa).

NAD(+)-binding positions include Lys-189 and 241–245 (GSVPT). Glu-263 (proton acceptor) is an active-site residue. Cys-297 functions as the Nucleophile in the catalytic mechanism. Residue Glu-400 coordinates NAD(+).

This sequence belongs to the aldehyde dehydrogenase family. In terms of assembly, homotetramer.

Its subcellular location is the cytoplasm. The protein localises to the cytosol. The enzyme catalyses 4-(trimethylamino)butanal + NAD(+) + H2O = 4-(trimethylamino)butanoate + NADH + 2 H(+). It carries out the reaction an aldehyde + NAD(+) + H2O = a carboxylate + NADH + 2 H(+). The protein operates within amine and polyamine biosynthesis; carnitine biosynthesis. Functionally, converts gamma-trimethylaminobutyraldehyde into gamma-butyrobetaine with high efficiency (in vitro). Can catalyze the irreversible oxidation of a broad range of aldehydes to the corresponding acids in an NAD-dependent reaction, but with low efficiency. In Gadus morhua subsp. callarias (Baltic cod), this protein is 4-trimethylaminobutyraldehyde dehydrogenase (aldh9A1).